The following is a 567-amino-acid chain: Restriction of telomere capping protein 5 (567 aa).

The TLDc domain occupies K289–G515.

This sequence belongs to the RTC5 family.

It localises to the cytoplasm. In terms of biological role, may be involved in a process influencing telomere capping. In Saccharomyces cerevisiae (strain YJM789) (Baker's yeast), this protein is Restriction of telomere capping protein 5 (RTC5).